A 451-amino-acid chain; its full sequence is GTPase Der (451 aa).

EngA-type G domains lie at Pro-5–Pro-170 and Ile-186–Phe-359. GTP-binding positions include Gly-11–Ser-18, Asp-58–Phe-62, Asn-122–Glu-125, Gly-192–Ser-199, Asp-239–Leu-243, and Asn-304–Asp-307. One can recognise a KH-like domain in the interval Ala-360–Arg-444.

Belongs to the TRAFAC class TrmE-Era-EngA-EngB-Septin-like GTPase superfamily. EngA (Der) GTPase family. Associates with the 50S ribosomal subunit.

In terms of biological role, GTPase that plays an essential role in the late steps of ribosome biogenesis. This is GTPase Der from Bordetella bronchiseptica (strain ATCC BAA-588 / NCTC 13252 / RB50) (Alcaligenes bronchisepticus).